Here is a 148-residue protein sequence, read N- to C-terminus: Large-conductance mechanosensitive channel (148 aa).

2 consecutive transmembrane segments (helical) span residues 15–35 and 84–104; these read LDMAVGVILGASFGTIVKSLV and VGVFANTVVSFTIVAFAVFLL.

This sequence belongs to the MscL family. As to quaternary structure, homopentamer.

The protein resides in the cell inner membrane. Functionally, channel that opens in response to stretch forces in the membrane lipid bilayer. May participate in the regulation of osmotic pressure changes within the cell. The protein is Large-conductance mechanosensitive channel of Nitratidesulfovibrio vulgaris (strain DSM 19637 / Miyazaki F) (Desulfovibrio vulgaris).